A 273-amino-acid polypeptide reads, in one-letter code: Phosphate import ATP-binding protein PstB (273 aa).

Residues 27-268 enclose the ABC transporter domain; the sequence is VTVRNLNFYY…PSDRRTQDYI (242 aa). 59–66 provides a ligand contact to ATP; sequence GPSGCGKS.

The protein belongs to the ABC transporter superfamily. Phosphate importer (TC 3.A.1.7) family. In terms of assembly, the complex is composed of two ATP-binding proteins (PstB), two transmembrane proteins (PstC and PstA) and a solute-binding protein (PstS).

It localises to the cell inner membrane. It carries out the reaction phosphate(out) + ATP + H2O = ADP + 2 phosphate(in) + H(+). In terms of biological role, part of the ABC transporter complex PstSACB involved in phosphate import. Responsible for energy coupling to the transport system. The sequence is that of Phosphate import ATP-binding protein PstB from Bradyrhizobium diazoefficiens (strain JCM 10833 / BCRC 13528 / IAM 13628 / NBRC 14792 / USDA 110).